The primary structure comprises 383 residues: Putative glutamate--cysteine ligase 2 (383 aa).

It belongs to the glutamate--cysteine ligase type 2 family. YbdK subfamily.

It catalyses the reaction L-cysteine + L-glutamate + ATP = gamma-L-glutamyl-L-cysteine + ADP + phosphate + H(+). In terms of biological role, ATP-dependent carboxylate-amine ligase which exhibits weak glutamate--cysteine ligase activity. The polypeptide is Putative glutamate--cysteine ligase 2 (Clavibacter sepedonicus (Clavibacter michiganensis subsp. sepedonicus)).